Consider the following 262-residue polypeptide: Shikimate dehydrogenase (NADP(+)) (262 aa).

Residues Ser15–Ser17 and Thr62 each bind shikimate. The Proton acceptor role is filled by Lys66. Glu78 serves as a coordination point for NADP(+). Shikimate contacts are provided by Asn87 and Asp102. Residues Gly126–Ala130, Asn150–Arg155, and Met214 contribute to the NADP(+) site. Position 216 (Tyr216) interacts with shikimate. Position 236 (Gly236) interacts with NADP(+).

Belongs to the shikimate dehydrogenase family. In terms of assembly, homodimer.

The catalysed reaction is shikimate + NADP(+) = 3-dehydroshikimate + NADPH + H(+). Its pathway is metabolic intermediate biosynthesis; chorismate biosynthesis; chorismate from D-erythrose 4-phosphate and phosphoenolpyruvate: step 4/7. Its function is as follows. Involved in the biosynthesis of the chorismate, which leads to the biosynthesis of aromatic amino acids. Catalyzes the reversible NADPH linked reduction of 3-dehydroshikimate (DHSA) to yield shikimate (SA). This is Shikimate dehydrogenase (NADP(+)) from Acinetobacter baumannii (strain ACICU).